Here is a 433-residue protein sequence, read N- to C-terminus: tRNA-2-methylthio-N(6)-dimethylallyladenosine synthase (433 aa).

Residues 3–118 (KKLFIQTLGC…ISTAVKTPKF (116 aa)) form the MTTase N-terminal domain. [4Fe-4S] cluster is bound by residues Cys12, Cys49, Cys81, Cys150, Cys154, and Cys157. A Radical SAM core domain is found at 136–369 (RGSPYKSHIN…QSRHNEILDE (234 aa)). The TRAM domain maps to 372–433 (AAQEGKILDV…RMVLYGELAN (62 aa)).

The protein belongs to the methylthiotransferase family. MiaB subfamily. Monomer. Requires [4Fe-4S] cluster as cofactor.

Its subcellular location is the cytoplasm. It carries out the reaction N(6)-dimethylallyladenosine(37) in tRNA + (sulfur carrier)-SH + AH2 + 2 S-adenosyl-L-methionine = 2-methylsulfanyl-N(6)-dimethylallyladenosine(37) in tRNA + (sulfur carrier)-H + 5'-deoxyadenosine + L-methionine + A + S-adenosyl-L-homocysteine + 2 H(+). Catalyzes the methylthiolation of N6-(dimethylallyl)adenosine (i(6)A), leading to the formation of 2-methylthio-N6-(dimethylallyl)adenosine (ms(2)i(6)A) at position 37 in tRNAs that read codons beginning with uridine. This chain is tRNA-2-methylthio-N(6)-dimethylallyladenosine synthase, found in Campylobacter curvus (strain 525.92).